We begin with the raw amino-acid sequence, 375 residues long: 23S rRNA (uracil(747)-C(5))-methyltransferase RlmC (375 aa).

Residues Cys-3, Cys-11, Cys-14, and Cys-87 each contribute to the [4Fe-4S] cluster site. S-adenosyl-L-methionine-binding residues include Gln-212, Phe-241, Glu-262, and Asn-307. Residue Cys-334 is the Nucleophile of the active site.

Belongs to the class I-like SAM-binding methyltransferase superfamily. RNA M5U methyltransferase family. RlmC subfamily.

It carries out the reaction uridine(747) in 23S rRNA + S-adenosyl-L-methionine = 5-methyluridine(747) in 23S rRNA + S-adenosyl-L-homocysteine + H(+). Catalyzes the formation of 5-methyl-uridine at position 747 (m5U747) in 23S rRNA. The protein is 23S rRNA (uracil(747)-C(5))-methyltransferase RlmC of Serratia proteamaculans (strain 568).